Consider the following 1096-residue polypeptide: Serine-repeat antigen protein 3 (1096 aa).

Residues 1 to 21 (MARLSSIVFIICLLLCNNAIS) form the signal peptide. The segment at 28–205 (PSSGGTLSGG…RSPPPQVNNI (178 aa)) is disordered. Low complexity predominate over residues 77 to 97 (NSDSTGDSSLGSTGSNGSQPA). N-linked (GlcNAc...) asparagine glycosylation is present at Asn-92. Residues 102–113 (KEPEPTTPKEPE) are compositionally biased toward basic and acidic residues. Residues 123 to 147 (VTPQKTAETASGKQVSPTPSENPPS) are compositionally biased toward polar residues. A compositionally biased stretch (basic and acidic residues) spans 149 to 161 (DTPKPESSSEKKV). 8 N-linked (GlcNAc...) asparagine glycosylation sites follow: Asn-204, Asn-607, Asn-637, Asn-662, Asn-671, Asn-712, Asn-892, and Asn-951. Disordered regions lie at residues 916–952 (EAKN…QANS) and 964–1006 (NQRT…ASAN). Polar residues-rich tracts occupy residues 925 to 952 (QNYG…QANS) and 964 to 975 (NQRTADSNPNAQ). Low complexity predominate over residues 976–1006 (STPSPNTTVTDTVNSNTANSNTANSNTASAN). 2 N-linked (GlcNAc...) asparagine glycosylation sites follow: Asn-981 and Asn-1039.

The protein belongs to the peptidase C1 family. In terms of processing, proteolytically cleaved in both blood and liver stage parasites. Precursor of 130 kDa is processed into 72 kDa and 55 kDa forms. Proteolytically cleaved by SUB1.

The protein resides in the cell membrane. It is found in the parasitophorous vacuole. The protein localises to the secreted. Its subcellular location is the host cytoplasm. Its function is as follows. Putative cysteine protease. Probably involved in merozoite release from the parasitophorous vacuole during liver stages. The chain is Serine-repeat antigen protein 3 from Plasmodium berghei (strain Anka).